The sequence spans 65 residues: uncharacterized protein (65 aa).

This is an uncharacterized protein from Rhizobium fredii (Sinorhizobium fredii).